The chain runs to 184 residues: Cytosolic Prostaglandin E synthase (184 aa).

The 90-residue stretch at 7–96 folds into the CS domain; it reads LIPPPVSWAQ…AAGPYWSSLT (90 aa). The tract at residues 115–184 is disordered; sequence ESDDEEGDQK…EGDKEKKPAA (70 aa). Ser116, Ser127, Ser135, Ser156, and Ser162 each carry phosphoserine. A compositionally biased stretch (acidic residues) spans 147–158; the sequence is FNVDDEEEDSDD. A compositionally biased stretch (basic and acidic residues) spans 175 to 184; sequence EGDKEKKPAA.

The protein belongs to the p23/wos2 family.

The protein localises to the cytoplasm. It catalyses the reaction prostaglandin H2 = prostaglandin E2. Functionally, cytosolic prostaglandin synthase that catalyzes the oxidoreduction of prostaglandin endoperoxide H2 (PGH2) to prostaglandin E2 (PGE2). Through production of PGE2 may regulate the activity of non-muscle myosin II in an autocrine or paracrine fashion; this may influence border cell and nurse cell stiffness to facilitate border cell migration during oogenesis. The sequence is that of Cytosolic Prostaglandin E synthase from Drosophila melanogaster (Fruit fly).